The primary structure comprises 199 residues: Holliday junction branch migration complex subunit RuvA (199 aa).

The tract at residues 1–65 is domain I; that stretch reads MIGWLHGQII…EDALLLYGFL (65 aa). The interval 66 to 144 is domain II; it reads DKEERSLFRS…QFDGSVSDTF (79 aa). The flexible linker stretch occupies residues 144 to 148; it reads FQKQA. The interval 149–199 is domain III; sequence GSTHSQQEAISALEALGYKPQEAWKVVNKIDNGNKSCEQLIREALQILSSR.

This sequence belongs to the RuvA family. Homotetramer. Forms an RuvA(8)-RuvB(12)-Holliday junction (HJ) complex. HJ DNA is sandwiched between 2 RuvA tetramers; dsDNA enters through RuvA and exits via RuvB. An RuvB hexamer assembles on each DNA strand where it exits the tetramer. Each RuvB hexamer is contacted by two RuvA subunits (via domain III) on 2 adjacent RuvB subunits; this complex drives branch migration. In the full resolvosome a probable DNA-RuvA(4)-RuvB(12)-RuvC(2) complex forms which resolves the HJ.

It is found in the cytoplasm. In terms of biological role, the RuvA-RuvB-RuvC complex processes Holliday junction (HJ) DNA during genetic recombination and DNA repair, while the RuvA-RuvB complex plays an important role in the rescue of blocked DNA replication forks via replication fork reversal (RFR). RuvA specifically binds to HJ cruciform DNA, conferring on it an open structure. The RuvB hexamer acts as an ATP-dependent pump, pulling dsDNA into and through the RuvAB complex. HJ branch migration allows RuvC to scan DNA until it finds its consensus sequence, where it cleaves and resolves the cruciform DNA. The chain is Holliday junction branch migration complex subunit RuvA from Legionella pneumophila (strain Paris).